A 211-amino-acid polypeptide reads, in one-letter code: Holliday junction branch migration complex subunit RuvA (211 aa).

The tract at residues 1–64 (MIGRLRGMLV…EDAQLLYGFA (64 aa)) is domain I. Residues 65 to 143 (NKVERKLFRL…DWQAQQIHLV (79 aa)) are domain II. Residues 144-162 (SDDGVIPEQLSAELSQETT) form a flexible linker region. Residues 163 to 211 (FVNDNKGDAINALLSLGYKQVQADKAVKSVYNRGMSSENIIRDALKSMI) form a domain III region.

The protein belongs to the RuvA family. As to quaternary structure, homotetramer. Forms an RuvA(8)-RuvB(12)-Holliday junction (HJ) complex. HJ DNA is sandwiched between 2 RuvA tetramers; dsDNA enters through RuvA and exits via RuvB. An RuvB hexamer assembles on each DNA strand where it exits the tetramer. Each RuvB hexamer is contacted by two RuvA subunits (via domain III) on 2 adjacent RuvB subunits; this complex drives branch migration. In the full resolvosome a probable DNA-RuvA(4)-RuvB(12)-RuvC(2) complex forms which resolves the HJ.

Its subcellular location is the cytoplasm. Functionally, the RuvA-RuvB-RuvC complex processes Holliday junction (HJ) DNA during genetic recombination and DNA repair, while the RuvA-RuvB complex plays an important role in the rescue of blocked DNA replication forks via replication fork reversal (RFR). RuvA specifically binds to HJ cruciform DNA, conferring on it an open structure. The RuvB hexamer acts as an ATP-dependent pump, pulling dsDNA into and through the RuvAB complex. HJ branch migration allows RuvC to scan DNA until it finds its consensus sequence, where it cleaves and resolves the cruciform DNA. The sequence is that of Holliday junction branch migration complex subunit RuvA from Colwellia psychrerythraea (strain 34H / ATCC BAA-681) (Vibrio psychroerythus).